A 247-amino-acid polypeptide reads, in one-letter code: uncharacterized protein (247 aa).

An N-terminal signal peptide occupies residues 1–35; that stretch reads MWGPGVTAEGLSVAPAPPPLLPLLLLLALALVAPS. Residues 82–102 form a helical membrane-spanning segment; the sequence is LSGLLILLVLFAIGYFLQRII. The segment at 109 to 176 is disordered; the sequence is YPRGQARPGQ…RGSGGRLPPS (68 aa). A compositionally biased stretch (low complexity) spans 111-120; that stretch reads RGQARPGQAR. A compositionally biased stretch (gly residues) spans 161–171; the sequence is SGGGRGRGSGG.

The protein localises to the membrane. This is an uncharacterized protein from Mus musculus (Mouse).